The sequence spans 387 residues: Lipid-A-disaccharide synthase (387 aa).

It belongs to the LpxB family.

The enzyme catalyses a lipid X + a UDP-2-N,3-O-bis[(3R)-3-hydroxyacyl]-alpha-D-glucosamine = a lipid A disaccharide + UDP + H(+). It participates in bacterial outer membrane biogenesis; LPS lipid A biosynthesis. Its function is as follows. Condensation of UDP-2,3-diacylglucosamine and 2,3-diacylglucosamine-1-phosphate to form lipid A disaccharide, a precursor of lipid A, a phosphorylated glycolipid that anchors the lipopolysaccharide to the outer membrane of the cell. The protein is Lipid-A-disaccharide synthase of Nitrosococcus oceani (strain ATCC 19707 / BCRC 17464 / JCM 30415 / NCIMB 11848 / C-107).